A 177-amino-acid polypeptide reads, in one-letter code: Anti-apoptotic protein NR13 (177 aa).

The BH1 motif lies at 75–94 (LEAEGGLNWGRLLALVVFTG). The helical transmembrane segment at 86–106 (LLALVVFTGTLAAALAESGCE) threads the bilayer. The short motif at 126-141 (EWLEEHGGWDGFCRFF) is the BH2 element. Residues 156–176 (SNAIMAAAGFGIAGLAFLLVV) traverse the membrane as a helical segment.

This sequence belongs to the Bcl-2 family. In terms of assembly, interacts with BAX. In terms of tissue distribution, expressed preferentially in heart, skeletal muscle, retina, optical tectum and bursa of Fabricius.

The protein localises to the cell membrane. In terms of biological role, shows anti-apoptotic properties. Counteract the pro-apoptotic activity of BAX. The sequence is that of Anti-apoptotic protein NR13 (NR13) from Gallus gallus (Chicken).